A 374-amino-acid polypeptide reads, in one-letter code: MISQINNEERDYKLEAYDYLLDPSLIASKPSAIRHASRLMIVRNSFLEEDCLTNKFTNNLLDEFREGDLVVVNNTKVMKARLKVELENKKLVELLVLERSHECVWLCLAKPAKKLKINRKLKLKSPLEQEINLIVDGVDEETGGRFIKFPENITCLNSMNELLDKYGEIPLPPYIKNSEEDSFHEKSYQTEYATNPGAVAAPTAGLHLSKSLISNLKKKGVIILPITLHVGYGTFKPIDQEDLSNLKLHKEWVSVNKEVVNEIKRIKKTDRKIIAIGTTSVRALESCYSHEINDFIPIAKYVNLVIKPGYKFKVVDGLLTNFHLPKSSLLLLVSAMIGRERLLELYKKAIKEKFRFFSYGDAMYISPDSLLEKK.

Belongs to the QueA family. As to quaternary structure, monomer.

It localises to the cytoplasm. It carries out the reaction 7-aminomethyl-7-carbaguanosine(34) in tRNA + S-adenosyl-L-methionine = epoxyqueuosine(34) in tRNA + adenine + L-methionine + 2 H(+). It participates in tRNA modification; tRNA-queuosine biosynthesis. Transfers and isomerizes the ribose moiety from AdoMet to the 7-aminomethyl group of 7-deazaguanine (preQ1-tRNA) to give epoxyqueuosine (oQ-tRNA). This Prochlorococcus marinus (strain AS9601) protein is S-adenosylmethionine:tRNA ribosyltransferase-isomerase.